Consider the following 252-residue polypeptide: Cell division protein ZapD (252 aa).

This sequence belongs to the ZapD family. In terms of assembly, interacts with FtsZ.

It localises to the cytoplasm. Cell division factor that enhances FtsZ-ring assembly. Directly interacts with FtsZ and promotes bundling of FtsZ protofilaments, with a reduction in FtsZ GTPase activity. The protein is Cell division protein ZapD of Cupriavidus taiwanensis (strain DSM 17343 / BCRC 17206 / CCUG 44338 / CIP 107171 / LMG 19424 / R1) (Ralstonia taiwanensis (strain LMG 19424)).